Here is a 174-residue protein sequence, read N- to C-terminus: Glyoxylase I 4 (174 aa).

In terms of domain architecture, VOC spans 13 to 135; the sequence is SLNHVSVLCR…DGFMIEICNC (123 aa). Glu-131 functions as the Proton donor/acceptor in the catalytic mechanism.

This sequence belongs to the glyoxalase I family. Mostly expressed in roots, and, to a lower extent, in leaves, flowers, seeds and siliques.

The protein localises to the cell membrane. The protein resides in the cytoplasm. Involved in the detoxification and scavenging of methylglyoxal (MG), a cytotoxic aldehyde produced in response to primary metabolism alteration observed during biotic and abiotic stresses. Modulates cross-talk between salicylic acid (SA) and jasmonic acid (JA) signaling pathways during defense responses to pathogens such as Botrytis cinerea. The polypeptide is Glyoxylase I 4 (Arabidopsis thaliana (Mouse-ear cress)).